Here is a 552-residue protein sequence, read N- to C-terminus: Leucine-rich repeat-containing protein 56 (552 aa).

LRR repeat units lie at residues 94 to 115, 117 to 138, 139 to 160, 161 to 182, and 186 to 206; these read NLIQLKLNHSYLGSLRDLGTSL, HLQVLWLARCGLTDLDGIGSFL, ELKELYVSYNNISDLSPLCLLE, QLEVLDLEGNNVEDLGQMRYLQ, and RLAMLTLEGNLVCLKPDPGPS. 2 disordered regions span residues 348–375 and 401–435; these read APLEQMPPHRPDLAIRPSTPRPDPAESC and QQERSAQVQAQDPQKDPVEQEDQTGPKTSLTPPRL.

The protein belongs to the LRRC56 family. In terms of assembly, interacts with IFT88.

Its subcellular location is the cell projection. The protein localises to the cilium. Functionally, required for the assembly of dynein arms. This is Leucine-rich repeat-containing protein 56 (Lrrc56) from Mus musculus (Mouse).